Reading from the N-terminus, the 87-residue chain is Small ribosomal subunit protein bS20 (87 aa).

Residues 1–26 (MANIKSAKKRAIQAEKARKHNASRRS) are disordered.

This sequence belongs to the bacterial ribosomal protein bS20 family.

Functionally, binds directly to 16S ribosomal RNA. The sequence is that of Small ribosomal subunit protein bS20 from Tolumonas auensis (strain DSM 9187 / NBRC 110442 / TA 4).